A 141-amino-acid polypeptide reads, in one-letter code: Hemoglobin subunit alpha-D (141 aa).

Positions M1–R141 constitute a Globin domain. Heme b is bound by residues H58 and H87.

This sequence belongs to the globin family. In terms of assembly, heterotetramer of two alpha-D chains and two beta chains. In terms of tissue distribution, red blood cells.

Involved in oxygen transport from the lung to the various peripheral tissues. This is Hemoglobin subunit alpha-D (HBAD) from Cairina moschata (Muscovy duck).